A 1146-amino-acid chain; its full sequence is Integrin alpha-PS1 (1146 aa).

The first 30 residues, 1–30 (MLELPFTTIRPNCRLRQNLGILIILQCVLT), serve as a signal peptide directing secretion. The Extracellular segment spans residues 31-1085 (CYNFNLEQRL…NQQRDTSIPW (1055 aa)). 7 FG-GAP repeats span residues 38-105 (QRLP…FDDC), 121-186 (LSPP…FEEV), 193-245 (RPVQ…YLQR), 254-303 (HSDL…KSTD), 304-366 (NPIP…TLPM), 367-422 (KYTL…GLNS), and 432-494 (ELGG…RKEL). Asn-68, Asn-86, and Asn-147 each carry an N-linked (GlcNAc...) asparagine glycan. Asn-470, Asn-511, Asn-657, Asn-680, Asn-711, Asn-718, Asn-761, and Asn-928 each carry an N-linked (GlcNAc...) asparagine glycan. A disordered region spans residues 938-958 (YYSSSHRDDHSDDTQSNRNRV). Residues 942–952 (SHRDDHSDDTQ) are compositionally biased toward basic and acidic residues. N-linked (GlcNAc...) asparagine glycosylation is present at Asn-1027. The chain crosses the membrane as a helical span at residues 1086–1106 (LIIILGIVGGLLLLALVTYVL). Topologically, residues 1107 to 1146 (WKVGFFKRIRPTDPTLSGNLEKMNEEKPFLAPSKNTHHVF) are cytoplasmic.

It belongs to the integrin alpha chain family. As to quaternary structure, heterodimer of an alpha and a beta subunit. The alpha subunit is composed of a heavy and a light chain linked by a disulfide bond. Alpha-PS1 associates with beta-PS. As to expression, expressed in follicle cells (at protein level). At syncytial blastoderm stage, expressed in the ectoderm but not in the mesodermal precursors. At embryonic stage 7, expressed in dorsal and ventrolateral ectoderm and in some yolk nuclei. At late stage 10, expression is homogeneous in the ectoderm and is particularly abundant in the anterior and posterior midgut primordia. At stage 11, strongly expressed in a metameric pattern in the ectoderm, in the proctodeum and in the posterior midgut primordium. At stage 12, accumulates at the segment boundaries that start to become morphologically visible, similar expression pattern is observed in the central nervous system. In third larval instar wing imaginal disk, strongly expressed in the dorsal compartment, in the adepithelial cells and in patches on the peripodial membrane covering the imaginal disk to the outside.

The protein resides in the apical cell membrane. It localises to the lateral cell membrane. It is found in the basal cell membrane. Its function is as follows. Integrin alpha-PS1/beta-PS is a receptor for laminin. The protein is Integrin alpha-PS1 (mew) of Drosophila melanogaster (Fruit fly).